The following is a 470-amino-acid chain: ATP synthase subunit beta (470 aa).

156–163 (GGAGVGKT) lines the ATP pocket.

Belongs to the ATPase alpha/beta chains family. In terms of assembly, F-type ATPases have 2 components, CF(1) - the catalytic core - and CF(0) - the membrane proton channel. CF(1) has five subunits: alpha(3), beta(3), gamma(1), delta(1), epsilon(1). CF(0) has three main subunits: a(1), b(2) and c(9-12). The alpha and beta chains form an alternating ring which encloses part of the gamma chain. CF(1) is attached to CF(0) by a central stalk formed by the gamma and epsilon chains, while a peripheral stalk is formed by the delta and b chains.

It localises to the cell inner membrane. It catalyses the reaction ATP + H2O + 4 H(+)(in) = ADP + phosphate + 5 H(+)(out). Produces ATP from ADP in the presence of a proton gradient across the membrane. The catalytic sites are hosted primarily by the beta subunits. The polypeptide is ATP synthase subunit beta (Thermosipho africanus (strain TCF52B)).